The primary structure comprises 154 residues: MTPQRKRRLVMLAALAGGVGVAVALALAALQQNINLFYSPSQIAAGEAPLHTRIRAGGLVQDGSLRRAPDSLAVQFGITDGVQQVLVRYDGILPDLFREGQGIVALGKLDAQGMLQADEVLAKHDQNYMPPEAAHALKQGAATSGGTPAAEPQP.

Residues 1 to 8 (MTPQRKRR) lie on the Cytoplasmic side of the membrane. The helical; Signal-anchor for type II membrane protein transmembrane segment at 9–29 (LVMLAALAGGVGVAVALALAA) threads the bilayer. At 30–154 (LQQNINLFYS…GGTPAAEPQP (125 aa)) the chain is on the periplasmic side. Residues His124 and Tyr128 each coordinate heme. Positions 130-154 (PPEAAHALKQGAATSGGTPAAEPQP) are disordered.

It belongs to the CcmE/CycJ family.

It localises to the cell inner membrane. Its function is as follows. Heme chaperone required for the biogenesis of c-type cytochromes. Transiently binds heme delivered by CcmC and transfers the heme to apo-cytochromes in a process facilitated by CcmF and CcmH. The polypeptide is Cytochrome c-type biogenesis protein CcmE (Bordetella petrii (strain ATCC BAA-461 / DSM 12804 / CCUG 43448)).